Consider the following 189-residue polypeptide: Cell division protein SepF (189 aa).

The segment at 25–70 is disordered; sequence ESRVQQQAVKPSNSRPAQQEPVRDIKQPRLVSSSSQHVTNTPSSNE. Composition is skewed to polar residues over residues 27–41 and 54–70; these read RVQQQAVKPSNSRPA and LVSSSSQHVTNTPSSNE.

It belongs to the SepF family. In terms of assembly, homodimer. Interacts with FtsZ.

The protein resides in the cytoplasm. Functionally, cell division protein that is part of the divisome complex and is recruited early to the Z-ring. Probably stimulates Z-ring formation, perhaps through the cross-linking of FtsZ protofilaments. Its function overlaps with FtsA. This Streptococcus gordonii (strain Challis / ATCC 35105 / BCRC 15272 / CH1 / DL1 / V288) protein is Cell division protein SepF.